Consider the following 427-residue polypeptide: Sperm-associated antigen 1A (427 aa).

The interval 46-113 (QKKGPGYREG…GPGSAGESCN (68 aa)) is disordered. TPR repeat units lie at residues 125–158 (LARL…CIEA), 167–200 (CVLY…HPFS), 202–234 (KPLL…DISV), 302–335 (FTIL…KPNE), 336–369 (CAIY…EPKN), and 371–403 (KAFY…DPNV).

It is found in the cytoplasm. The protein resides in the dynein axonemal particle. In terms of biological role, may play a role in the cytoplasmic assembly and/or trafficking of the axonemal dynein arms. This is Sperm-associated antigen 1A (spag1a) from Danio rerio (Zebrafish).